We begin with the raw amino-acid sequence, 390 residues long: Anhydro-N-acetylmuramic acid kinase (390 aa).

Residue glycine 9–aspartate 16 participates in ATP binding.

The protein belongs to the anhydro-N-acetylmuramic acid kinase family.

It catalyses the reaction 1,6-anhydro-N-acetyl-beta-muramate + ATP + H2O = N-acetyl-D-muramate 6-phosphate + ADP + H(+). It participates in amino-sugar metabolism; 1,6-anhydro-N-acetylmuramate degradation. Its pathway is cell wall biogenesis; peptidoglycan recycling. Functionally, catalyzes the specific phosphorylation of 1,6-anhydro-N-acetylmuramic acid (anhMurNAc) with the simultaneous cleavage of the 1,6-anhydro ring, generating MurNAc-6-P. Is required for the utilization of anhMurNAc either imported from the medium or derived from its own cell wall murein, and thus plays a role in cell wall recycling. This is Anhydro-N-acetylmuramic acid kinase from Bacillus cereus (strain ATCC 14579 / DSM 31 / CCUG 7414 / JCM 2152 / NBRC 15305 / NCIMB 9373 / NCTC 2599 / NRRL B-3711).